Here is a 389-residue protein sequence, read N- to C-terminus: Chorismate synthase (389 aa).

The NADP(+) site is built by Arg-39 and Arg-45. Residues 130-132, 251-252, Gly-296, 311-315, and Arg-338 contribute to the FMN site; these read RSS, NA, and KPIPT.

It belongs to the chorismate synthase family. In terms of assembly, homotetramer. It depends on FMNH2 as a cofactor.

The enzyme catalyses 5-O-(1-carboxyvinyl)-3-phosphoshikimate = chorismate + phosphate. It functions in the pathway metabolic intermediate biosynthesis; chorismate biosynthesis; chorismate from D-erythrose 4-phosphate and phosphoenolpyruvate: step 7/7. In terms of biological role, catalyzes the anti-1,4-elimination of the C-3 phosphate and the C-6 proR hydrogen from 5-enolpyruvylshikimate-3-phosphate (EPSP) to yield chorismate, which is the branch point compound that serves as the starting substrate for the three terminal pathways of aromatic amino acid biosynthesis. This reaction introduces a second double bond into the aromatic ring system. The chain is Chorismate synthase from Oceanobacillus iheyensis (strain DSM 14371 / CIP 107618 / JCM 11309 / KCTC 3954 / HTE831).